Consider the following 302-residue polypeptide: 4-diphosphocytidyl-2-C-methyl-D-erythritol kinase (302 aa).

K13 is a catalytic residue. P101 to S111 lines the ATP pocket. D143 is a catalytic residue.

The protein belongs to the GHMP kinase family. IspE subfamily.

The catalysed reaction is 4-CDP-2-C-methyl-D-erythritol + ATP = 4-CDP-2-C-methyl-D-erythritol 2-phosphate + ADP + H(+). It functions in the pathway isoprenoid biosynthesis; isopentenyl diphosphate biosynthesis via DXP pathway; isopentenyl diphosphate from 1-deoxy-D-xylulose 5-phosphate: step 3/6. Catalyzes the phosphorylation of the position 2 hydroxy group of 4-diphosphocytidyl-2C-methyl-D-erythritol. This Granulibacter bethesdensis (strain ATCC BAA-1260 / CGDNIH1) protein is 4-diphosphocytidyl-2-C-methyl-D-erythritol kinase.